Reading from the N-terminus, the 503-residue chain is CDK5 regulatory subunit-associated protein 3 (503 aa).

3 short sequence motifs (shuffled ATG8-binding motif) span residues 266-269, 288-291, and 306-309; these read IDWG. The required for interaction with UFL1 and mediates interaction with CHEK1 stretch occupies residues 268 to 503; that stretch reads WGDFGVEAVS…RPVNLMGTSL (236 aa). The interval 352-367 is RPL10a-binding domain (RBD); the sequence is DELMELEIFLSQRAVE. A Glycyl lysine isopeptide (Lys-Gly) (interchain with G-Cter in SUMO2) cross-link involves residue K447.

This sequence belongs to the CDK5RAP3 family. Substrate adapter component of the UFM1 ribosome E3 ligase (UREL) complex, composed of UFL1, DDRGK1 and CDK5RAP3. Interaction with UFL1 anchors CDK5RAP3 in the cytoplasm, preventing its translocation to the nucleus which allows expression of the CCND1 cyclin and progression of cells through the G1/S transition. Interacts with ATG8 family proteins MAP1LC3A, MAP1LC3B, GABARAP, GABARAPL1 and GABARAPL2. Interacts with CDK5R1; competes with CDK5RAP1 and CDK5RAP2. Interacts with RELA. Interacts with CHEK1; may negatively regulate CHEK1 and thereby stimulate entry into mitosis. Interacts with CDKN2A/ARF and MDM2; forms a ternary complex involved in regulation of p53/TP53. Interacts with MAPK14. Interacts with CCNB1. Interacts with TUBG1; may regulate CDK5RAP3 in mitotic G2/M transition checkpoint. In terms of processing, may be phosphorylated by CDK5. Ubiquitinated. Probably triggers proteasomal degradation and is negatively regulated by UFL1. Post-translationally, may be ufmylated. In terms of processing, cleaved by caspases early during apoptosis, the resulting peptides may play a role in rupture of the nuclear envelope. Widely expressed with higher expression in secretory tissues.

The protein resides in the endoplasmic reticulum membrane. It is found in the cytoplasm. It localises to the nucleus. Its subcellular location is the cytoskeleton. The protein localises to the microtubule organizing center. The protein resides in the centrosome. Its function is as follows. Substrate adapter of E3 ligase complexes mediating ufmylation, the covalent attachment of the ubiquitin-like modifier UFM1 to substrate proteins, and which is involved in various processes, such as ribosome recycling and reticulophagy (also called ER-phagy). As part of the UREL complex, plays a key role in ribosome recycling by promoting mono-ufmylation of RPL26/uL24 subunit of the 60S ribosome. Ufmylation of RPL26/uL24 occurs on free 60S ribosomes following ribosome dissociation: it weakens the junction between post-termination 60S subunits and SEC61 translocons, promoting release and recycling of the large ribosomal subunit from the endoplasmic reticulum membrane. Ufmylation of RPL26/uL24 and subsequent 60S ribosome recycling either take place after normal termination of translation or after ribosome stalling during cotranslational translocation at the endoplasmic reticulum. Within the UREL complex, CDK5RAP3 acts as a substrate adapter that constrains UFL1 ligase activity to mono-ufmylate RPL26/uL24 at 'Lys-134'. The UREL complex is also involved in reticulophagy in response to endoplasmic reticulum stress by promoting ufmylation of proteins such as CYB5R3, thereby promoting lysosomal degradation of ufmylated proteins. Also acts as a regulator of transcription: negatively regulates NF-kappa-B-mediated gene transcription through the control of RELA phosphorylation. Also regulates mitotic G2/M transition checkpoint and mitotic G2 DNA damage checkpoint. Through its interaction with CDKN2A/ARF and MDM2 may induce MDM2-dependent p53/TP53 ubiquitination, stabilization and activation in the nucleus, thereby promoting G1 cell cycle arrest and inhibition of cell proliferation. May also play a role in the rupture of the nuclear envelope during apoptosis. May regulate MAPK14 activity by regulating its dephosphorylation by PPM1D/WIP1. Required for liver development. This Mus musculus (Mouse) protein is CDK5 regulatory subunit-associated protein 3.